Reading from the N-terminus, the 226-residue chain is Charged multivesicular body protein 5 (226 aa).

The stretch at 21-93 (IAGVDARATN…NQSFNMEQAN (73 aa)) forms a coiled coil. The segment covering 188–198 (KAPEAPSREPG) has biased composition (basic and acidic residues). Residues 188–226 (KAPEAPSREPGADSIVPGKSTIETDEFGLPKIPTSLKTT) are disordered. Residue serine 201 is modified to Phosphoserine. Threonine 226 bears the Phosphothreonine mark.

It belongs to the SNF7 family. In terms of assembly, probable peripherally associated component of the endosomal sorting required for transport complex III (ESCRT-III).

It localises to the endosome membrane. Probable peripherally associated component of the endosomal sorting required for transport complex III (ESCRT-III) which is involved in multivesicular bodies (MVBs) formation and sorting of endosomal cargo proteins into MVBs. MVBs contain intraluminal vesicles (ILVs) that are generated by invagination and scission from the limiting membrane of the endosome and are delivered to lysosomes enabling degradation of membrane proteins. Specifically down-regulates Notch signaling activity in the germarium, probably by facilitating Notch endocytosis. The polypeptide is Charged multivesicular body protein 5 (Drosophila melanogaster (Fruit fly)).